Reading from the N-terminus, the 97-residue chain is U-scoloptoxin(10)-Sa2a (97 aa).

The signal sequence occupies residues 1–23 (MNKSMLIFFTILFLTYIIEEKEA).

The protein belongs to the scoloptoxin-10 family. Post-translationally, contains 3 disulfide bonds. In terms of tissue distribution, expressed by the venom gland.

It localises to the secreted. This chain is U-scoloptoxin(10)-Sa2a, found in Scolopendra alternans (Florida Keys giant centipede).